We begin with the raw amino-acid sequence, 151 residues long: Urease accessory protein UreE (151 aa).

The protein belongs to the UreE family.

It is found in the cytoplasm. Its function is as follows. Involved in urease metallocenter assembly. Binds nickel. Probably functions as a nickel donor during metallocenter assembly. This chain is Urease accessory protein UreE, found in Lachnoclostridium phytofermentans (strain ATCC 700394 / DSM 18823 / ISDg) (Clostridium phytofermentans).